Consider the following 388-residue polypeptide: Purple acid phosphatase 19 (388 aa).

The N-terminal stretch at 1-24 (MGLNHLTLVCSAIALLSIFVVSQA) is a signal peptide. N-linked (GlcNAc...) asparagine glycans are attached at residues Asn-97 and Asn-111. Fe cation is bound by residues Asp-145 and Tyr-148. Asp-145 is a binding site for Zn(2+). Asn-182 contributes to the Zn(2+) binding site. Residue Asn-182 coordinates substrate. N-linked (GlcNAc...) asparagine glycosylation occurs at Asn-226. His-238 contacts Zn(2+). His-248 serves as the catalytic Proton donor. Residue His-275 participates in Zn(2+) binding. Residue 275 to 277 (HVH) coordinates substrate. Residue His-277 coordinates Fe cation. N-linked (GlcNAc...) asparagine glycosylation is found at Asn-291 and Asn-348.

It belongs to the metallophosphoesterase superfamily. Purple acid phosphatase family. As to quaternary structure, homodimer. Requires Fe cation as cofactor. Zn(2+) is required as a cofactor. In terms of tissue distribution, specifically expressed in flowers.

It is found in the secreted. The catalysed reaction is a phosphate monoester + H2O = an alcohol + phosphate. The chain is Purple acid phosphatase 19 (PAP19) from Arabidopsis thaliana (Mouse-ear cress).